A 727-amino-acid chain; its full sequence is Glucans biosynthesis glucosyltransferase H (727 aa).

The disordered stretch occupies residues 18 to 43 (SAMPNERPGAMEPQSLSQMPEGFPRR). Transmembrane regions (helical) follow at residues 58–78 (FFVV…MGAV), 94–114 (LFAI…AGFF), 278–298 (LQQF…GWWV), 408–428 (IMAY…LMLA), 460–480 (LFYI…LLLL), 496–516 (ILSV…MMFI), and 572–592 (LLAW…ISAW).

It belongs to the glycosyltransferase 2 family. OpgH subfamily.

It is found in the cell inner membrane. It participates in glycan metabolism; osmoregulated periplasmic glucan (OPG) biosynthesis. Its function is as follows. Involved in the biosynthesis of osmoregulated periplasmic glucans (OPGs). The chain is Glucans biosynthesis glucosyltransferase H from Shewanella sp. (strain ANA-3).